A 202-amino-acid chain; its full sequence is UPF0056 membrane protein PH0214 (202 aa).

A run of 6 helical transmembrane segments spans residues 5 to 25 (ILSS…ILLV), 47 to 67 (IGFI…QDIF), 76 to 96 (VAGG…GGMV), 104 to 124 (ILAL…AAIT), 135 to 155 (IIVS…LMMI), and 174 to 194 (IIGL…AGGI).

The protein belongs to the UPF0056 (MarC) family.

It is found in the cell membrane. This is UPF0056 membrane protein PH0214 from Pyrococcus horikoshii (strain ATCC 700860 / DSM 12428 / JCM 9974 / NBRC 100139 / OT-3).